The chain runs to 346 residues: Mitogen-activated protein kinase kinase 1c (346 aa).

The Protein kinase domain maps to Leu70 to Leu332. ATP contacts are provided by residues Leu76–Val84 and Lys99. The active-site Proton acceptor is Asp194.

This sequence belongs to the protein kinase superfamily. STE Ser/Thr protein kinase family. MAP kinase kinase subfamily.

It carries out the reaction L-seryl-[protein] + ATP = O-phospho-L-seryl-[protein] + ADP + H(+). The catalysed reaction is L-threonyl-[protein] + ATP = O-phospho-L-threonyl-[protein] + ADP + H(+). The enzyme catalyses L-tyrosyl-[protein] + ATP = O-phospho-L-tyrosyl-[protein] + ADP + H(+). The CERK1, MEKK1a/b, MKK1a/b/c and MPK4a/b proteins are involved in pathogen defense. The pathway induces rapid growth inhibition, cell wall depositions and accumulation of defense-related transcripts. This protein is required for full defense response to fungal pathogen chitin. This Physcomitrium patens (Spreading-leaved earth moss) protein is Mitogen-activated protein kinase kinase 1c.